We begin with the raw amino-acid sequence, 258 residues long: MILDKIFEKTKEDLKERKLKLPYDMLGRSLASNPFFPKDVIKALKRVEKEVKIIAEVKKASPSKGVIREDFDPLSIALNYEKNKAAAISVLTEPHFFKGSLEYLSLIRRYTQIPLLRKDFIFDEYQILEALVYGADFVLLIAKMLSMKELKKLLEFARHLGLEALVEIHDKEDLSKAIFAGADIIGINHRNLEDFTMDMSLCEKLIPQIPNSKIIIAESGLENKEFLEHLQNLGVDAFLIGEYFMREKDEGKALKALL.

This sequence belongs to the TrpC family.

The enzyme catalyses 1-(2-carboxyphenylamino)-1-deoxy-D-ribulose 5-phosphate + H(+) = (1S,2R)-1-C-(indol-3-yl)glycerol 3-phosphate + CO2 + H2O. It functions in the pathway amino-acid biosynthesis; L-tryptophan biosynthesis; L-tryptophan from chorismate: step 4/5. This is Indole-3-glycerol phosphate synthase from Campylobacter jejuni (strain RM1221).